The chain runs to 114 residues: Vacuolar ATPase assembly integral membrane protein VMA21 (114 aa).

The Cytoplasmic portion of the chain corresponds to 1–39 (MATRRIISQEKTLLEKDDSIGSSPAADEKSNIAPAVPTS). Residues 40–60 (VIMKLLAFTLGMIVIPIGSYF) traverse the membrane as a helical segment. Residues 61–73 (ATVDSVFNGNSTY) are Lumenal-facing. The chain crosses the membrane as a helical span at residues 74 to 94 (AGALAAIMANVVLIGYIFVAM). Residues 95-114 (AEDQSDQQEGGGPGDGKKDR) lie on the Cytoplasmic side of the membrane. The Prevents secretion from ER signature appears at 111–114 (KKDR).

It belongs to the VMA21 family.

It is found in the endoplasmic reticulum membrane. The protein resides in the endoplasmic reticulum-Golgi intermediate compartment membrane. It localises to the cytoplasmic vesicle. The protein localises to the COPII-coated vesicle membrane. Its function is as follows. Required for the assembly of the V0 complex of the vacuolar ATPase (V-ATPase) in the endoplasmic reticulum. The polypeptide is Vacuolar ATPase assembly integral membrane protein VMA21 (Chaetomium globosum (strain ATCC 6205 / CBS 148.51 / DSM 1962 / NBRC 6347 / NRRL 1970) (Soil fungus)).